We begin with the raw amino-acid sequence, 328 residues long: Pantothenate kinase (328 aa).

The span at 1–12 (MAAPLNAQTRAP) shows a compositional bias: polar residues. Residues 1–22 (MAAPLNAQTRAPQATGRAPDFS) form a disordered region. Position 113-120 (113-120 (GSVAVGKS)) interacts with ATP.

This sequence belongs to the prokaryotic pantothenate kinase family.

Its subcellular location is the cytoplasm. It carries out the reaction (R)-pantothenate + ATP = (R)-4'-phosphopantothenate + ADP + H(+). Its pathway is cofactor biosynthesis; coenzyme A biosynthesis; CoA from (R)-pantothenate: step 1/5. The protein is Pantothenate kinase of Corynebacterium efficiens (strain DSM 44549 / YS-314 / AJ 12310 / JCM 11189 / NBRC 100395).